Consider the following 459-residue polypeptide: Probable cysteine protease ATG4 (459 aa).

Over residues 77–90 (LPTTPSTTTLPYPL) the composition is skewed to low complexity. The segment at 77 to 104 (LPTTPSTTTLPYPLKAVPTTPPESSSSS) is disordered. Residue Cys178 is the Nucleophile of the active site. Catalysis depends on residues Asp359 and His361.

This sequence belongs to the peptidase C54 family.

It localises to the cytoplasm. The protein resides in the nucleus. It is found in the preautophagosomal structure. The enzyme catalyses [protein]-C-terminal L-amino acid-glycyl-phosphatidylethanolamide + H2O = [protein]-C-terminal L-amino acid-glycine + a 1,2-diacyl-sn-glycero-3-phosphoethanolamine. Its function is as follows. Cysteine protease that plays a key role in cytoplasm to vacuole transport (Cvt) and autophagy by mediating both proteolytic activation and delipidation of ATG8. Required for selective autophagic degradation of the nucleus (nucleophagy) as well as for mitophagy which contributes to regulate mitochondrial quantity and quality by eliminating the mitochondria to a basal level to fulfill cellular energy requirements and preventing excess ROS production. The protease activity is required for proteolytic activation of ATG8: cleaves the C-terminal amino acid of ATG8 to reveal a C-terminal glycine. ATG8 ubiquitin-like activity requires the exposure of the glycine at the C-terminus for its conjugation to phosphatidylethanolamine (PE) and its insertion to membranes, which is necessary for autophagy. The ATG8-PE conjugate mediates tethering between adjacent membranes and stimulates membrane hemifusion, leading to expansion of the autophagosomal membrane during autophagy. In addition to the protease activity, also catalyzes deconjugation of PE-conjugated forms of ATG8 during macroautophagy: ATG8 delipidation is required to release the protein from membranes, which facilitates multiple events during macroautophagy, and especially for efficient autophagosome biogenesis, the assembly of ATG9-containing tubulovesicular clusters into phagophores/autophagosomes, and for the disassembly of PAS-associated ATG components. ATG8 delipidation by ATG4 also recycles ATG8-PE generated on inappropriate membranes to maintain a reservoir of unlipidated ATG8 that is required for autophagosome formation at the PAS. This Cryphonectria parasitica (Chestnut blight fungus) protein is Probable cysteine protease ATG4 (ATG4).